A 220-amino-acid chain; its full sequence is Phosphoribosylformylglycinamidine synthase subunit PurQ (220 aa).

Residues Arg2–Val220 form the Glutamine amidotransferase type-1 domain. The Nucleophile role is filled by Cys85. Catalysis depends on residues His193 and Glu195.

Part of the FGAM synthase complex composed of 1 PurL, 1 PurQ and 2 PurS subunits.

Its subcellular location is the cytoplasm. It carries out the reaction N(2)-formyl-N(1)-(5-phospho-beta-D-ribosyl)glycinamide + L-glutamine + ATP + H2O = 2-formamido-N(1)-(5-O-phospho-beta-D-ribosyl)acetamidine + L-glutamate + ADP + phosphate + H(+). The catalysed reaction is L-glutamine + H2O = L-glutamate + NH4(+). The protein operates within purine metabolism; IMP biosynthesis via de novo pathway; 5-amino-1-(5-phospho-D-ribosyl)imidazole from N(2)-formyl-N(1)-(5-phospho-D-ribosyl)glycinamide: step 1/2. In terms of biological role, part of the phosphoribosylformylglycinamidine synthase complex involved in the purines biosynthetic pathway. Catalyzes the ATP-dependent conversion of formylglycinamide ribonucleotide (FGAR) and glutamine to yield formylglycinamidine ribonucleotide (FGAM) and glutamate. The FGAM synthase complex is composed of three subunits. PurQ produces an ammonia molecule by converting glutamine to glutamate. PurL transfers the ammonia molecule to FGAR to form FGAM in an ATP-dependent manner. PurS interacts with PurQ and PurL and is thought to assist in the transfer of the ammonia molecule from PurQ to PurL. The chain is Phosphoribosylformylglycinamidine synthase subunit PurQ from Rubrobacter xylanophilus (strain DSM 9941 / JCM 11954 / NBRC 16129 / PRD-1).